A 255-amino-acid chain; its full sequence is DNA repair protein RecO (255 aa).

This sequence belongs to the RecO family.

Involved in DNA repair and RecF pathway recombination. The protein is DNA repair protein RecO of Bacillus velezensis (strain DSM 23117 / BGSC 10A6 / LMG 26770 / FZB42) (Bacillus amyloliquefaciens subsp. plantarum).